A 319-amino-acid polypeptide reads, in one-letter code: F-box only protein 8 (319 aa).

The region spanning 68-111 (FINLEMLPPELSFTILSYLNATDLCLASCVWQDLANDELLWQGL) is the F-box domain. One can recognise an SEC7 domain in the interval 146–276 (FNANPEEGVS…LILLSIDLTS (131 aa)).

In terms of tissue distribution, high expression in brain, heart, kidney, liver, lung, skeletal muscle, testis, and day-7 embryos.

Its function is as follows. May promote guanine-nucleotide exchange on an ARF. Promotes the activation of ARF through replacement of GDP with GTP (Potential). This chain is F-box only protein 8 (Fbxo8), found in Mus musculus (Mouse).